Here is a 313-residue protein sequence, read N- to C-terminus: Aspartate carbamoyltransferase catalytic subunit (313 aa).

Residues Arg-61 and Thr-62 each contribute to the carbamoyl phosphate site. Lys-89 serves as a coordination point for L-aspartate. Carbamoyl phosphate-binding residues include Arg-111, His-139, and Gln-142. The L-aspartate site is built by Arg-172 and Arg-227. Positions 268 and 269 each coordinate carbamoyl phosphate.

This sequence belongs to the aspartate/ornithine carbamoyltransferase superfamily. ATCase family. Heterododecamer (2C3:3R2) of six catalytic PyrB chains organized as two trimers (C3), and six regulatory PyrI chains organized as three dimers (R2).

The catalysed reaction is carbamoyl phosphate + L-aspartate = N-carbamoyl-L-aspartate + phosphate + H(+). It functions in the pathway pyrimidine metabolism; UMP biosynthesis via de novo pathway; (S)-dihydroorotate from bicarbonate: step 2/3. In terms of biological role, catalyzes the condensation of carbamoyl phosphate and aspartate to form carbamoyl aspartate and inorganic phosphate, the committed step in the de novo pyrimidine nucleotide biosynthesis pathway. This Gluconobacter oxydans (strain 621H) (Gluconobacter suboxydans) protein is Aspartate carbamoyltransferase catalytic subunit.